A 344-amino-acid chain; its full sequence is Anamorsin homolog 1 (344 aa).

The tract at residues 1-169 is N-terminal SAM-like domain; it reads MANNVGVLLA…DTGSVFQIRK (169 aa). The interval 170-233 is linker; sequence KVSNQNGNFR…EDDLLTEEDL (64 aa). Positions 244, 251, 254, and 256 each coordinate [2Fe-2S] cluster. Residues 244–256 are fe-S binding site A; that stretch reads CAPTKKACKNCTC. [4Fe-4S] cluster contacts are provided by cysteine 282, cysteine 285, cysteine 293, and cysteine 296. 2 consecutive short sequence motifs (cx2C motif) follow at residues 282–285 and 293–296; these read CGSC and CAGC. The interval 282 to 296 is fe-S binding site B; sequence CGSCGLGDAFRCAGC.

The protein belongs to the anamorsin family. Monomer. [2Fe-2S] cluster is required as a cofactor. [4Fe-4S] cluster serves as cofactor.

Its subcellular location is the cytoplasm. The protein localises to the mitochondrion intermembrane space. Component of the cytosolic iron-sulfur (Fe-S) protein assembly (CIA) machinery. Required for the maturation of extramitochondrial Fe-S proteins. Part of an electron transfer chain functioning in an early step of cytosolic Fe-S biogenesis, facilitating the de novo assembly of a [4Fe-4S] cluster on the cytosolic Fe-S scaffold complex. Electrons are transferred from NADPH via a FAD- and FMN-containing diflavin oxidoreductase. Together with the diflavin oxidoreductase, also required for the assembly of the diferric tyrosyl radical cofactor of ribonucleotide reductase (RNR), probably by providing electrons for reduction during radical cofactor maturation in the catalytic small subunit. This is Anamorsin homolog 1 from Physcomitrium patens (Spreading-leaved earth moss).